The sequence spans 953 residues: Coatomer subunit beta-1 (953 aa).

HEAT repeat units follow at residues 49–87 (ETLPHLFITVVRYVLPSEDHTIQKLLLLYLEIVDKRDVA), 93–127 (PEMILICQNLRNNLQHPNEYIRGVTLRFLCRLNEP), 128–165 (ELLEPLIPSILANLDHRHHFIRRHALSAISAIYRLPHG), 314–351 (DVMVDVVMDVLRALSSPNVDVRRKVLDLVLDLLTPRNV), and 393–430 (EVAGSVVHLLMDFLGDTNVAAAVDVVLFVREIIETNPK).

In terms of assembly, oligomeric complex that consists of at least the alpha, beta, beta', gamma, delta, epsilon and zeta subunits.

The protein localises to the cytoplasm. It is found in the golgi apparatus membrane. Its subcellular location is the cytoplasmic vesicle. The protein resides in the COPI-coated vesicle membrane. The coatomer is a cytosolic protein complex that binds to dilysine motifs and reversibly associates with Golgi non-clathrin-coated vesicles, which further mediate biosynthetic protein transport from the ER, via the Golgi up to the trans Golgi network. Coatomer complex is required for budding from Golgi membranes, and is essential for the retrograde Golgi-to-ER transport of dilysine-tagged proteins. In Oryza sativa subsp. japonica (Rice), this protein is Coatomer subunit beta-1.